The sequence spans 517 residues: U3 small nucleolar RNA-associated protein 15 homolog (517 aa).

WD repeat units lie at residues 36–75 (KEFGAVSKIDFSPLPPHNYAVTASTRVHIYGLHSQEPIRN), 78–117 (RFHDTAYGGSFRGDGKLLVAGSEEGLIRLFDIGGRVSLRQ), 120–159 (GHSKAVHATSFLSDGFRVLSGSDDLTCRVWDVASAVELSS), 162–202 (EHTD…SVMT), 204–242 (QHGQPVECVLLYPSEALLVSTGGRYVKVWDLLKGGQQLV), 246–285 (NHHKTVTCACLSSSNKLLTASLDRHVKVYNSSYKVVHNFD), and 287–324 (ASSILSLAVAPDDEAVAVGMTNGVLSIRHRKHKEEKEA).

In terms of assembly, part of the small subunit (SSU) processome, composed of more than 70 proteins and the RNA chaperone small nucleolar RNA (snoRNA) U3. May be a component of the proposed t-UTP subcomplex of the ribosomal small subunit (SSU) processome.

It localises to the nucleus. The protein localises to the nucleolus. Functionally, ribosome biogenesis factor. Involved in nucleolar processing of pre-18S ribosomal RNA. Required for optimal pre-ribosomal RNA transcription by RNA polymerase I. Part of the small subunit (SSU) processome, first precursor of the small eukaryotic ribosomal subunit. During the assembly of the SSU processome in the nucleolus, many ribosome biogenesis factors, an RNA chaperone and ribosomal proteins associate with the nascent pre-rRNA and work in concert to generate RNA folding, modifications, rearrangements and cleavage as well as targeted degradation of pre-ribosomal RNA by the RNA exosome. This is U3 small nucleolar RNA-associated protein 15 homolog (utp15) from Danio rerio (Zebrafish).